The following is a 131-amino-acid chain: Small ribosomal subunit protein uS8 (131 aa).

Belongs to the universal ribosomal protein uS8 family. Part of the 30S ribosomal subunit. Contacts proteins S5 and S12.

One of the primary rRNA binding proteins, it binds directly to 16S rRNA central domain where it helps coordinate assembly of the platform of the 30S subunit. The sequence is that of Small ribosomal subunit protein uS8 from Dehalococcoides mccartyi (strain CBDB1).